The sequence spans 569 residues: Urease subunit alpha (569 aa).

Residues 131–569 (GGVDAHIHFI…VAMAQRYFLF (439 aa)) enclose the Urease domain. Positions 136, 138, and 219 each coordinate Ni(2+). Lys219 carries the N6-carboxylysine modification. His221 provides a ligand contact to substrate. Residues His248 and His274 each contribute to the Ni(2+) site. His322 serves as the catalytic Proton donor. Asp362 provides a ligand contact to Ni(2+).

The protein belongs to the metallo-dependent hydrolases superfamily. Urease alpha subunit family. As to quaternary structure, heterotrimer of UreA (gamma), UreB (beta) and UreC (alpha) subunits. Three heterotrimers associate to form the active enzyme. It depends on Ni cation as a cofactor. Carboxylation allows a single lysine to coordinate two nickel ions.

It localises to the cytoplasm. The enzyme catalyses urea + 2 H2O + H(+) = hydrogencarbonate + 2 NH4(+). The protein operates within nitrogen metabolism; urea degradation; CO(2) and NH(3) from urea (urease route): step 1/1. The chain is Urease subunit alpha from Geobacillus kaustophilus (strain HTA426).